Reading from the N-terminus, the 114-residue chain is Large ribosomal subunit protein uL18 (114 aa).

This sequence belongs to the universal ribosomal protein uL18 family. In terms of assembly, part of the 50S ribosomal subunit; part of the 5S rRNA/L5/L18/L25 subcomplex. Contacts the 5S and 23S rRNAs.

Functionally, this is one of the proteins that bind and probably mediate the attachment of the 5S RNA into the large ribosomal subunit, where it forms part of the central protuberance. The polypeptide is Large ribosomal subunit protein uL18 (Aster yellows phytoplasma).